Reading from the N-terminus, the 304-residue chain is MMEYPNQSGFRQRKLLPQVRMRGSAMEPSDPTQLFDDTSSGVNKHEPGRVGKSPDVFSGQNLLSDPMSNLAMAYGSSLASHGKEMMDKNLDRFIPISKLKYYFAVDTVYVGKKLGLLVFPYMHDNWEVNYQQDTPVAPRFDINAPDLYIPVMGFITYVLVAGLALGTQNRFSPEILGIQASSALVWLIIEVLAVLLSLYLVTVNTDLTTIDLVAFSGYKYVGMIVGVVAGLLFGRTGYYLALLWFCASIFVFTIRTLRLKILSEAAAEGRLVRGTKNQLRMYLTMAIAAAQPVFMYWLTFHLVR.

At Met1–Asp146 the chain is on the cytoplasmic side. Residues Met21–Pro54 form a disordered region. Residues Asp30–Val42 are compositionally biased toward polar residues. A helical membrane pass occupies residues Leu147–Thr167. Over Gln168–Ser182 the chain is Extracellular. A helical membrane pass occupies residues Ala183 to Val203. The Cytoplasmic segment spans residues Asn204–Leu212. A helical transmembrane segment spans residues Val213 to Phe233. Topologically, residues Gly234 to Thr236 are extracellular. The chain crosses the membrane as a helical span at residues Gly237–Leu257. Residues Arg258–Tyr282 are Cytoplasmic-facing. The chain crosses the membrane as a helical span at residues Leu283–Val303. Arg304 is a topological domain (extracellular).

This sequence belongs to the YIF1 family.

It localises to the endoplasmic reticulum membrane. The protein resides in the golgi apparatus membrane. The protein localises to the endoplasmic reticulum-Golgi intermediate compartment membrane. In terms of biological role, functions in endoplasmic reticulum to Golgi vesicle-mediated transport and regulates the proper organization of the endoplasmic reticulum and the Golgi. Plays a key role in targeting to neuronal dendrites receptors such as HTR1A. Plays also a role in primary cilium and sperm flagellum assembly probably through protein transport to these compartments. This chain is Protein YIF1B (yif1b), found in Danio rerio (Zebrafish).